The sequence spans 502 residues: NAD(P)H-quinone oxidoreductase chain 4, chloroplastic (502 aa).

14 helical membrane-spanning segments follow: residues 4–24, 37–57, 86–106, 113–131, 136–156, 169–189, 210–230, 244–264, 274–294, 307–327, 332–352, 388–408, 418–438, and 464–484; these read FPWLTVIVVLPISAGSSIFFV, YTICICLLEILLTTYAFCYHF, GLSIGPILLTGFITTLATLAA, SRLFHFLMLAMYSGQVGSF, LLLFFLMWELELIPVYLLLSM, FILYTAGGSIFLLMGVSGMGL, GLEIIFYFGFLIAYAVKSPII, HYSTCMLLAGILLKMGAYGLV, AHSIFSPWLVIVGAIQIIYAA, IAYSSVSHMGFTLIGIGSITD, GAILQIISHGFIGAALFFLAG, LALPGMSGFVAELVVFFGIIT, IVISFVMAIGMILTPIYSLSM, and LFVSICIFLPVVGIGIYPDFV.

The protein belongs to the complex I subunit 4 family.

The protein localises to the plastid. It localises to the chloroplast thylakoid membrane. The catalysed reaction is a plastoquinone + NADH + (n+1) H(+)(in) = a plastoquinol + NAD(+) + n H(+)(out). It carries out the reaction a plastoquinone + NADPH + (n+1) H(+)(in) = a plastoquinol + NADP(+) + n H(+)(out). The chain is NAD(P)H-quinone oxidoreductase chain 4, chloroplastic from Calycanthus floridus var. glaucus (Eastern sweetshrub).